The primary structure comprises 129 residues: Ribulose bisphosphate carboxylase small subunit (129 aa).

It belongs to the RuBisCO small chain family. In terms of assembly, heterohexadecamer of 8 large and 8 small subunits.

Functionally, ruBisCO catalyzes two reactions: the carboxylation of D-ribulose 1,5-bisphosphate, the primary event in carbon dioxide fixation, as well as the oxidative fragmentation of the pentose substrate. Both reactions occur simultaneously and in competition at the same active site. Although the small subunit is not catalytic it is essential for maximal activity. The sequence is that of Ribulose bisphosphate carboxylase small subunit from Cereibacter sphaeroides (Rhodobacter sphaeroides).